The following is a 154-amino-acid chain: Transcriptional repressor NrdR (154 aa).

The segment at 3–34 is a zinc-finger region; sequence CPFCGNVDTQVKDSRPAEDNVAIRRRRFCPAC. An ATP-cone domain is found at 49-139; the sequence is LVVVKSSGRR…VYKNFQAADD (91 aa).

Belongs to the NrdR family. Requires Zn(2+) as cofactor.

Functionally, negatively regulates transcription of bacterial ribonucleotide reductase nrd genes and operons by binding to NrdR-boxes. This is Transcriptional repressor NrdR from Paracoccus denitrificans (strain Pd 1222).